The following is a 173-amino-acid chain: Mediator of RNA polymerase II transcription subunit 10 (173 aa).

Residues 1–20 are compositionally biased toward polar residues; that stretch reads MDPNSPMFQNTPQQPMSLQR. The segment at 1 to 45 is disordered; the sequence is MDPNSPMFQNTPQQPMSLQRSVDDRIDRERTAKKEKDDEKKKQED. Residues 21-45 are compositionally biased toward basic and acidic residues; sequence SVDDRIDRERTAKKEKDDEKKKQED.

This sequence belongs to the Mediator complex subunit 10 family. As to quaternary structure, component of the Mediator complex.

It localises to the nucleus. Functionally, component of the Mediator complex, a coactivator involved in the regulated transcription of nearly all RNA polymerase II-dependent genes. Mediator functions as a bridge to convey information from gene-specific regulatory proteins to the basal RNA polymerase II transcription machinery. Mediator is recruited to promoters by direct interactions with regulatory proteins and serves as a scaffold for the assembly of a functional preinitiation complex with RNA polymerase II and the general transcription factors. The polypeptide is Mediator of RNA polymerase II transcription subunit 10 (mdt-10) (Caenorhabditis briggsae).